We begin with the raw amino-acid sequence, 627 residues long: Nuclear receptor subfamily 4 group A member 3 (627 aa).

An activation function (AF)-1 domain region spans residues 1-112 (MPCVQAQYSP…HHHHHHHHHQ (112 aa)). A required for DNA-PK heterotrimer region spans residues 1 to 139 (MPCVQAQYSP…PSTSMYFKQS (139 aa)). The interval 1–292 (MPCVQAQYSP…NRSSSSGEGT (292 aa)) is interaction with NCOA1, NCOA2, NCOA3 and KAT2B. Disordered stretches follow at residues 96–162 (HGYH…DELP) and 268–289 (ASSL…SSSG). Residues 97 to 112 (GYHHHHHHHHHHHHHQ) show a composition bias toward basic residues. Residues 141-150 (PSTPTTPGFP) show a composition bias toward pro residues. The segment covering 269–288 (SSLLGESPSLPSPPNRSSSS) has biased composition (low complexity). A DNA-binding region (nuclear receptor) is located at residues 290 to 365 (EGTCAVCGDN…VGMVKEVVRT (76 aa)). 2 NR C4-type zinc fingers span residues 293–313 (CAVC…CEGC) and 329–353 (CLAN…FQKC). The disordered stretch occupies residues 365–395 (TDSLKGRRGRLPSKPKSPLQQEPSQPSPPSP). Residues 378–388 (KPKSPLQQEPS) show a composition bias toward low complexity. Residues 380 to 627 (KSPLQQEPSQ…DKLFLDTLPF (248 aa)) are interaction with KAT2B. Residues 395-624 (PPICMMNALV…SVIDKLFLDT (230 aa)) form the NR LBD domain.

Belongs to the nuclear hormone receptor family. NR4 subfamily. In terms of assembly, interacts with SIX3 (via homeobox); differentially regulates the transcriptional activities of NR4A3. Interacts with NCOA2; potentiates the activity of the NR4A3. Interacts with NCOA1, NCOA3, MED1 and KAT2B. Interacts with EP300 and NCOA2; mediates the recruitment of MED1 in the coactivator complex. Interacts with the constituents of DNA-PK heterotrimer PRKDC, XRCC6 and XRCC5; phosphorylates and prevents NR4A3 ubiquitinylation and degradation. Interacts with NR3C1 (via nuclear receptor DNA-binding domain); the interactions represses transcription activity of NR4A3 on the POMC promoter Nur response element (NurRE). Interacts with TRIM28; the interactions potentiates NR4A3 activity on NurRE promoter. Binds DNA as a monomer and homodimer. Interacts with PARP1; activates PARP1 by improving acetylation of PARP1 and suppressing the interaction between PARP1 and SIRT1. Post-translationally, phosphorylated by PRKDC. Ubiquitous. Highest levels of expression in brain. Widely expressed throughout the arcuate nucleus region of the hypothalamus, namely in AgRP neurons.

The protein localises to the nucleus. Functionally, transcriptional activator that binds to regulatory elements in promoter regions in a cell- and response element (target)-specific manner. Induces gene expression by binding as monomers to the NR4A1 response element (NBRE) 5'-AAAAGGTCA-3' site and as homodimers to the Nur response element (NurRE) site in the promoter of their regulated target genes. Plays a role in the regulation of proliferation, survival and differentiation of many different cell types and also in metabolism and inflammation. Mediates proliferation of vascular smooth muscle, myeloid progenitor cell and type B pancreatic cells; promotes mitogen-induced vascular smooth muscle cell proliferation through transactivation of SKP2 promoter by binding a NBRE site. Upon PDGF stimulation, stimulates vascular smooth muscle cell proliferation by regulating CCND1 and CCND2 expression. In islets, induces type B pancreatic cell proliferation through up-regulation of genes that activate cell cycle, as well as genes that cause degradation of the CDKN1A. Negatively regulates myeloid progenitor cell proliferation by repressing RUNX1 in a NBRE site-independent manner. During inner ear, plays a role as a key mediator of the proliferative growth phase of semicircular canal development. Also mediates survival of neuron and smooth muscle cells; mediates CREB-induced neuronal survival, and during hippocampus development, plays a critical role in pyramidal cell survival and axonal guidance. Is required for S phase entry of the cell cycle and survival of smooth muscle cells by inducing CCND1, resulting in RB1 phosphorylation. Binds to NBRE motif in CCND1 promoter, resulting in the activation of the promoter and CCND1 transcription. Also plays a role in inflammation; upon TNF stimulation, mediates monocyte adhesion by inducing the expression of VCAM1 and ICAM1 by binding to the NBRE consensus site. In mast cells activated by Fc-epsilon receptor cross-linking, promotes the synthesis and release of cytokines but impairs events leading to degranulation. Also plays a role in metabolism; by modulating feeding behavior; and by playing a role in energy balance by inhibiting the glucocorticoid-induced orexigenic neuropeptides AGRP expression, at least in part by forming a complex with activated NR3C1 on the AGRP- glucocorticoid response element (GRE), and thus weakening the DNA binding activity of NR3C1. Upon catecholamines stimulation, regulates gene expression that controls oxidative metabolism in skeletal muscle. Plays a role in glucose transport by regulating translocation of the SLC2A4 glucose transporter to the cell surface. Finally, during gastrulation plays a crucial role in the formation of anterior mesoderm by controlling cell migration. Inhibits adipogenesis. Also participates in cardiac hypertrophy by activating PARP1. This Mus musculus (Mouse) protein is Nuclear receptor subfamily 4 group A member 3 (Nr4a3).